The primary structure comprises 48 residues: Glycine-rich RNA-binding protein 2 (48 aa).

This chain is Glycine-rich RNA-binding protein 2, found in Populus euphratica (Euphrates poplar).